Consider the following 327-residue polypeptide: UPF0065 protein in gbd 5'region (327 aa).

The tat-type signal signal peptide spans 1 to 30 (MQRRHFIARAGIAAATAALGLAAMPAQAQA).

Belongs to the UPF0065 (bug) family. In terms of processing, predicted to be exported by the Tat system. The position of the signal peptide cleavage has not been experimentally proven.

The protein localises to the periplasm. The chain is UPF0065 protein in gbd 5'region from Cupriavidus necator (Alcaligenes eutrophus).